A 298-amino-acid polypeptide reads, in one-letter code: ATP synthase F(1) complex subunit gamma, mitochondrial (298 aa).

A mitochondrion-targeting transit peptide spans 1 to 25 (MFSRAGVAGLSAWTVQPQWIQVRNM). Lysine 39 is modified (N6-acetyllysine). Position 49 is an N6-succinyllysine (lysine 49). Lysine 55 is modified (N6-acetyllysine). Lysine 115 is subject to N6-acetyllysine; alternate. Lysine 115 is modified (N6-succinyllysine; alternate). Serine 146 carries the post-translational modification Phosphoserine. Lysine 154 carries the N6-acetyllysine; alternate modification. Position 154 is an N6-succinyllysine; alternate (lysine 154). Residue lysine 197 is modified to N6-acetyllysine. Lysine 270 is subject to N6-succinyllysine.

Belongs to the ATPase gamma chain family. Component of the ATP synthase complex composed at least of ATP5F1A/subunit alpha, ATP5F1B/subunit beta, ATP5MC1/subunit c (homooctomer), MT-ATP6/subunit a, MT-ATP8/subunit 8, ATP5ME/subunit e, ATP5MF/subunit f, ATP5MG/subunit g, ATP5MK/subunit k, ATP5MJ/subunit j, ATP5F1C/subunit gamma, ATP5F1D/subunit delta, ATP5F1E/subunit epsilon, ATP5PF/subunit F6, ATP5PB/subunit b, ATP5PD/subunit d, ATP5PO/subunit OSCP. ATP synthase complex consists of a soluble F(1) head domain (subunits alpha(3) and beta(3)) - the catalytic core - and a membrane F(0) domain - the membrane proton channel (subunits c, a, 8, e, f, g, k and j). These two domains are linked by a central stalk (subunits gamma, delta, and epsilon) rotating inside the F1 region and a stationary peripheral stalk (subunits F6, b, d, and OSCP). Interacts with FLVCR2; this interaction occurs in the absence of heme and is disrupted upon heme binding.

The protein resides in the mitochondrion inner membrane. In terms of biological role, subunit gamma, of the mitochondrial membrane ATP synthase complex (F(1)F(0) ATP synthase or Complex V) that produces ATP from ADP in the presence of a proton gradient across the membrane which is generated by electron transport complexes of the respiratory chain. ATP synthase complex consist of a soluble F(1) head domain - the catalytic core - and a membrane F(1) domain - the membrane proton channel. These two domains are linked by a central stalk rotating inside the F(1) region and a stationary peripheral stalk. During catalysis, ATP synthesis in the catalytic domain of F(1) is coupled via a rotary mechanism of the central stalk subunits to proton translocation. In vivo, can only synthesize ATP although its ATP hydrolase activity can be activated artificially in vitro. With the central stalk subunit delta, is essential for the biogenesis of F(1) catalytic part of the ATP synthase complex namely in the formation of F1 assembly intermediate. The protein is ATP synthase F(1) complex subunit gamma, mitochondrial of Bos taurus (Bovine).